Consider the following 448-residue polypeptide: Protein ECM7 (448 aa).

Topologically, residues methionine 1 to arginine 28 are cytoplasmic. A helical transmembrane segment spans residues leucine 29 to serine 49. Residues proline 50–asparagine 204 are Extracellular-facing. A helical transmembrane segment spans residues valine 205–tryptophan 225. Topologically, residues tyrosine 226–asparagine 246 are cytoplasmic. A helical membrane pass occupies residues serine 247–valine 267. Residues asparagine 268 to histidine 287 are Extracellular-facing. Residues leucine 288 to leucine 308 form a helical membrane-spanning segment. Residues alanine 309–phenylalanine 448 lie on the Cytoplasmic side of the membrane. 2 stretches are compositionally biased toward polar residues: residues tyrosine 351–glycine 363 and valine 383–asparagine 406. Disordered stretches follow at residues tyrosine 351–glutamate 411 and arginine 427–phenylalanine 448.

It is found in the membrane. May be involved in cell wall organization and biogenesis. This Saccharomyces cerevisiae (strain ATCC 204508 / S288c) (Baker's yeast) protein is Protein ECM7 (ECM7).